The following is a 131-amino-acid chain: Cytochrome b5 (131 aa).

In terms of domain architecture, Cytochrome b5 heme-binding spans 3–79 (AKIFSLDEVS…LEEYLIGSLD (77 aa)). 2 residues coordinate heme: H38 and H62. A helical membrane pass occupies residues 108 to 125 (IILPALAIIGALVYKYVI).

The protein belongs to the cytochrome b5 family.

Its subcellular location is the endoplasmic reticulum membrane. The protein resides in the microsome membrane. Functionally, membrane bound hemoprotein which function as an electron carrier for several membrane bound oxygenases. The sequence is that of Cytochrome b5 from Rhizopus stolonifer (Rhizopus nigricans).